The chain runs to 610 residues: DNA mismatch repair protein MutL (610 aa).

Belongs to the DNA mismatch repair MutL/HexB family.

This protein is involved in the repair of mismatches in DNA. It is required for dam-dependent methyl-directed DNA mismatch repair. May act as a 'molecular matchmaker', a protein that promotes the formation of a stable complex between two or more DNA-binding proteins in an ATP-dependent manner without itself being part of a final effector complex. The sequence is that of DNA mismatch repair protein MutL from Rickettsia rickettsii (strain Iowa).